Reading from the N-terminus, the 81-residue chain is Cytotoxin I-like T-15 (81 aa).

A signal peptide spans 1-21 (MKTLLLTLVVVTIVCLDLGYT). Cystine bridges form between Cys-24/Cys-42, Cys-35/Cys-59, Cys-63/Cys-74, and Cys-75/Cys-80.

The protein belongs to the three-finger toxin family. Short-chain subfamily. Type IA cytotoxin sub-subfamily. In terms of assembly, monomer in solution; Homodimer and oligomer in the presence of negatively charged lipids forming a pore with a size ranging between 20 and 30 Angstroms. As to expression, expressed by the venom gland.

It is found in the secreted. The protein resides in the target cell membrane. Functionally, shows cytolytic activity on many different cells by forming pore in lipid membranes. In vivo, increases heart rate or kills the animal by cardiac arrest. In addition, it binds to heparin with high affinity, interacts with Kv channel-interacting protein 1 (KCNIP1) in a calcium-independent manner, and binds to integrin alpha-V/beta-3 (ITGAV/ITGB3) with moderate affinity. The chain is Cytotoxin I-like T-15 from Naja atra (Chinese cobra).